We begin with the raw amino-acid sequence, 46 residues long: Large ribosomal subunit protein bL36 (46 aa).

Belongs to the bacterial ribosomal protein bL36 family.

This chain is Large ribosomal subunit protein bL36, found in Serratia proteamaculans (strain 568).